The sequence spans 248 residues: Probable transcriptional regulatory protein FTW_1073 (248 aa).

This sequence belongs to the TACO1 family.

It is found in the cytoplasm. In Francisella tularensis subsp. tularensis (strain WY96-3418), this protein is Probable transcriptional regulatory protein FTW_1073.